The primary structure comprises 397 residues: Lysophospholipid transporter LplT (397 aa).

The Periplasmic segment spans residues 1–17 (MSESVHTNTSLWSKGMK). A helical transmembrane segment spans residues 18–38 (AVIVAQFLSAFGDNALLFATL). The Cytoplasmic segment spans residues 39-52 (ALLKAQFYPEWSQP). The chain crosses the membrane as a helical span at residues 53-73 (VLQMVFVGAYILFAPFVGQVA). Residues 74–90 (DSFAKGRVMMFANGLKL) lie on the Periplasmic side of the membrane. A helical membrane pass occupies residues 91–111 (LGAASICFGFNPFVGYTLVGI). Over 112–144 (GAAAYSPAKYGILGELTTGDKLVKANGLMEAST) the chain is Cytoplasmic. Residues 145–165 (IAAILLGSVAGGVLADLHVLV) form a helical membrane-spanning segment. Position 166 (A166) is a topological domain, periplasmic. Residues 167–187 (LAACALAYAGAVAANIYIPKL) form a helical membrane-spanning segment. At 188–226 (AAARPGQSWNVLKMTCSFKSACTSLWQNGETRFSLVGTS) the chain is on the cytoplasmic side. Residues 227–247 (LFWGAGVTLRFLLVLWVPVAL) traverse the membrane as a helical segment. At 248-256 (GITDNATPT) the chain is on the periplasmic side. The chain crosses the membrane as a helical span at residues 257 to 277 (YLNAMVAIGIVLGAGAAAKLV). The Cytoplasmic segment spans residues 278–280 (TLE). Residues 281-301 (TVSRCMPAGILIGVVVLFFSL) form a helical membrane-spanning segment. Residues 302-304 (QHE) lie on the Periplasmic side of the membrane. Residues 305-325 (LLPAYALLMLIGVLGGFFVVP) traverse the membrane as a helical segment. Residues 326–343 (LNALLQERGKKSVGAGNA) are Cytoplasmic-facing. A helical membrane pass occupies residues 344–364 (IAVQNLGENSAMLLMLGIYSL). Over 365-366 (AV) the chain is Periplasmic. A helical transmembrane segment spans residues 367 to 387 (LVGIPVVPIGIGFGTLFALAI). At 388 to 397 (TALWIWQRRH) the chain is on the cytoplasmic side.

It belongs to the major facilitator superfamily. LplT (TC 2.A.1.42) family.

It is found in the cell inner membrane. Functionally, catalyzes the facilitated diffusion of 2-acyl-glycero-3-phosphoethanolamine (2-acyl-GPE) into the cell. This chain is Lysophospholipid transporter LplT, found in Escherichia fergusonii (strain ATCC 35469 / DSM 13698 / CCUG 18766 / IAM 14443 / JCM 21226 / LMG 7866 / NBRC 102419 / NCTC 12128 / CDC 0568-73).